Here is a 519-residue protein sequence, read N- to C-terminus: MTKMIDISAMPAELSEKNTLTARRLGIDTHEHAVIYMRADCHICRAEGFNNHARIKVSGPSNKAIIATLNLVVTDLLSPGQIGLSETAWLRLQLNEGDPVRLIHPAPLLSLSAVRAKIFGEPLDQNNLDAIVGDIAAGRFSDIHLSAFLTASAAHEQSFEEIRDLTLSMVNVGQRLDWGRAPIVDKHCVGGLPGNRTTPIVVAICVAAGLTMPKTSSRAITSPAGTADTMETLAPVELDVSAMRRVVETVGGCIVWGGAVALSPVDDTLIRIERALDIDSDGQLVASVLSKKIAAGATHLVIDMPVGPTAKVRTEEAAARLEGLFARVGSNLGLNLKIMRTDGSQPVGRGIGPALEAWDVLAVLNNEGHNVPDLTVQATLLAGELLEMGQAAPAGRGAELATELLVNGRAWRAFEAICEAQGGFREPPTAPHYQVIQSPRDGVVGRIDNRRLAKAAKLAGAPASKAAGIVLHAKLGSQMVKGQPLYSLHSQSLGELSYAHDYLASQPEIIEIEEEQCPR.

The protein belongs to the thymidine/pyrimidine-nucleoside phosphorylase family. Type 2 subfamily.

It catalyses the reaction thymidine + phosphate = 2-deoxy-alpha-D-ribose 1-phosphate + thymine. This Maricaulis maris (strain MCS10) (Caulobacter maris) protein is Putative thymidine phosphorylase.